A 389-amino-acid polypeptide reads, in one-letter code: MADPRDKALQDYRKKLLEHKEIDGRLKELREQLKELTKQYEKSENDLKALQSVGQIVGEVLKQLTEEKFIVKATNGPRYVVGCRRQLDKSKLKPGTRVALDMTTLTIMRYLPREVDPLVYNMSHEDPGNVSYSEIGGLSEQIRELREVIELPLTNPELFQRVGIIPPKGCLLYGPPGTGKTLLARAVASQLDCNFLKVVSSSIVDKYIGESARLIREMFNYARDHQPCIIFMDEIDAIGGRRFSEGTSADREIQRTLMELLNQMDGFDTLHRVKMIMATNRPDTLDPALLRPGRLDRKIHIDLPNEQARLDILKIHAGPITKHGEIDYEAIVKLSDGFNGADLGNVCTEAGMFAIRADHDFVVQEDFMKAVRKVADSKKLESKLDYKPV.

At Lys-72 the chain carries N6-acetyllysine. Position 174–181 (174–181) interacts with ATP; the sequence is GPPGTGKT. At Lys-206 the chain carries N6-acetyllysine. Position 244 is a phosphoserine (Ser-244).

It belongs to the AAA ATPase family. As to quaternary structure, component of the 19S proteasome regulatory particle complex. The 26S proteasome consists of a 20S core particle (CP) and two 19S regulatory subunits (RP). The regulatory particle is made of a lid composed of 9 subunits, a base containing 6 ATPases including PSMC6 and few additional components. Interacts with PAAF1.

The protein resides in the cytoplasm. It localises to the nucleus. Component of the 26S proteasome, a multiprotein complex involved in the ATP-dependent degradation of ubiquitinated proteins. This complex plays a key role in the maintenance of protein homeostasis by removing misfolded or damaged proteins, which could impair cellular functions, and by removing proteins whose functions are no longer required. Therefore, the proteasome participates in numerous cellular processes, including cell cycle progression, apoptosis, or DNA damage repair. PSMC6 belongs to the heterohexameric ring of AAA (ATPases associated with diverse cellular activities) proteins that unfolds ubiquitinated target proteins that are concurrently translocated into a proteolytic chamber and degraded into peptides. The polypeptide is 26S proteasome regulatory subunit 10B (PSMC6) (Bos taurus (Bovine)).